We begin with the raw amino-acid sequence, 164 residues long: Peptide deformylase (164 aa).

C87 and H129 together coordinate Fe cation. The active site involves E130. H133 serves as a coordination point for Fe cation.

The protein belongs to the polypeptide deformylase family. It depends on Fe(2+) as a cofactor.

It catalyses the reaction N-terminal N-formyl-L-methionyl-[peptide] + H2O = N-terminal L-methionyl-[peptide] + formate. In terms of biological role, removes the formyl group from the N-terminal Met of newly synthesized proteins. Requires at least a dipeptide for an efficient rate of reaction. N-terminal L-methionine is a prerequisite for activity but the enzyme has broad specificity at other positions. This is Peptide deformylase from Thermotoga maritima (strain ATCC 43589 / DSM 3109 / JCM 10099 / NBRC 100826 / MSB8).